The following is a 186-amino-acid chain: Ribosome-recycling factor (186 aa).

Belongs to the RRF family.

It is found in the cytoplasm. Functionally, responsible for the release of ribosomes from messenger RNA at the termination of protein biosynthesis. May increase the efficiency of translation by recycling ribosomes from one round of translation to another. This chain is Ribosome-recycling factor, found in Polaromonas sp. (strain JS666 / ATCC BAA-500).